A 188-amino-acid polypeptide reads, in one-letter code: Peptidyl-tRNA hydrolase (188 aa).

Y15 is a tRNA binding site. H20 functions as the Proton acceptor in the catalytic mechanism. TRNA is bound by residues F63, N65, and N111.

This sequence belongs to the PTH family. As to quaternary structure, monomer.

It is found in the cytoplasm. It carries out the reaction an N-acyl-L-alpha-aminoacyl-tRNA + H2O = an N-acyl-L-amino acid + a tRNA + H(+). Functionally, hydrolyzes ribosome-free peptidyl-tRNAs (with 1 or more amino acids incorporated), which drop off the ribosome during protein synthesis, or as a result of ribosome stalling. Its function is as follows. Catalyzes the release of premature peptidyl moieties from peptidyl-tRNA molecules trapped in stalled 50S ribosomal subunits, and thus maintains levels of free tRNAs and 50S ribosomes. The chain is Peptidyl-tRNA hydrolase from Hydrogenobaculum sp. (strain Y04AAS1).